The primary structure comprises 260 residues: Cytosolic Fe-S cluster assembly factor Nubp2 homolog (260 aa).

14-21 (GKGGVGKS) is an ATP binding site. Residues C188 and C191 each coordinate [4Fe-4S] cluster.

It belongs to the Mrp/NBP35 ATP-binding proteins family. NUBP2/CFD1 subfamily. In terms of assembly, heterotetramer of 2 Nubp1 and 2 Nubp2 chains. [4Fe-4S] cluster is required as a cofactor.

Its subcellular location is the cytoplasm. Functionally, component of the cytosolic iron-sulfur (Fe/S) protein assembly (CIA) machinery. Required for maturation of extramitochondrial Fe-S proteins. The Nubp1-Nubp2 heterotetramer forms a Fe-S scaffold complex, mediating the de novo assembly of an Fe-S cluster and its transfer to target apoproteins. This is Cytosolic Fe-S cluster assembly factor Nubp2 homolog from Drosophila sechellia (Fruit fly).